We begin with the raw amino-acid sequence, 271 residues long: Large ribosomal subunit protein uL3c (271 aa).

The transit peptide at 1–49 (MAIAMAVVSFPSLLNKTTLSSSLFTPTFLPAKSSSLLIKSSPKTRFVVS) directs the protein to the chloroplast. A disordered region spans residues 190 to 222 (HGSKSHRALGSIGAGTTPGRVYKGKKMPGRMGG).

It belongs to the universal ribosomal protein uL3 family. In terms of assembly, part of the 50S ribosomal subunit.

Its subcellular location is the plastid. It is found in the chloroplast. Functionally, one of the primary rRNA binding proteins, it binds directly near the 3'-end of the 23S rRNA, where it nucleates assembly of the 50S subunit. This chain is Large ribosomal subunit protein uL3c (RPL3A), found in Arabidopsis thaliana (Mouse-ear cress).